Here is a 39-residue protein sequence, read N- to C-terminus: Phosphatase RapI inhibitor (39 aa).

A propeptide spanning residues 1-34 is cleaved from the precursor; sequence MKISRILLAAVILSSVFSITYLQSDHNTEIKVAA.

This sequence belongs to the Phr family. Contains a predicted signal peptide cleavage site in the N-terminal region, however the propeptide is probably subject to only one processing event, at the N-terminal end of the mature peptide.

The protein localises to the secreted. Its subcellular location is the cytoplasm. Its function is as follows. Intercellular signaling molecule that inhibits excision of the mobile genetic element ICEBs1 when cells are crowded by cells that contain ICEBs1 and produce the PhrI peptide. Secreted during production, but the mature peptide acts intracellularly, indicating that it needs to be imported into the cell to function. Acts by inhibiting RapI activity. The chain is Phosphatase RapI inhibitor (phrI) from Bacillus subtilis (strain 168).